A 287-amino-acid polypeptide reads, in one-letter code: 4-hydroxybenzoate octaprenyltransferase (287 aa).

A run of 9 helical transmembrane segments spans residues 22–42 (IGTL…AQGF), 45–65 (LGVL…GCVI), 91–111 (TSTE…LLVL), 114–134 (NSLT…YPFM), 139–159 (QLPQ…AFAA), 161–181 (ANAL…WTIA), 212–232 (IIIA…GWLE), 236–256 (WIYF…QLQI), and 267–287 (AFLD…LGYL).

This sequence belongs to the UbiA prenyltransferase family. Mg(2+) serves as cofactor.

The protein localises to the cell inner membrane. The catalysed reaction is all-trans-octaprenyl diphosphate + 4-hydroxybenzoate = 4-hydroxy-3-(all-trans-octaprenyl)benzoate + diphosphate. Its pathway is cofactor biosynthesis; ubiquinone biosynthesis. Its function is as follows. Catalyzes the prenylation of para-hydroxybenzoate (PHB) with an all-trans polyprenyl group. Mediates the second step in the final reaction sequence of ubiquinone-8 (UQ-8) biosynthesis, which is the condensation of the polyisoprenoid side chain with PHB, generating the first membrane-bound Q intermediate 3-octaprenyl-4-hydroxybenzoate. The chain is 4-hydroxybenzoate octaprenyltransferase from Psychromonas ingrahamii (strain DSM 17664 / CCUG 51855 / 37).